We begin with the raw amino-acid sequence, 89 residues long: MAFTAAEKSVIVQEFQRAPGDTGSPEVQVALLTNRINYLTPHFVKHKKDFHSRRGLLRLVNQRRKLLDYLKNTDNERYRTLIERLGLRK.

The protein belongs to the universal ribosomal protein uS15 family. As to quaternary structure, part of the 30S ribosomal subunit. Forms a bridge to the 50S subunit in the 70S ribosome, contacting the 23S rRNA.

One of the primary rRNA binding proteins, it binds directly to 16S rRNA where it helps nucleate assembly of the platform of the 30S subunit by binding and bridging several RNA helices of the 16S rRNA. In terms of biological role, forms an intersubunit bridge (bridge B4) with the 23S rRNA of the 50S subunit in the ribosome. The polypeptide is Small ribosomal subunit protein uS15 (Methylococcus capsulatus (strain ATCC 33009 / NCIMB 11132 / Bath)).